Here is a 154-residue protein sequence, read N- to C-terminus: uncharacterized protein (154 aa).

Coiled coils occupy residues 8–48 (DEEV…AIEA) and 89–138 (VQEL…RGLV).

This is an uncharacterized protein from Treponema pallidum (strain Nichols).